The sequence spans 469 residues: Beta-1,3-xylanase (469 aa).

A signal peptide spans 1–22 (MKKLAKMISIATLGACAFSAHA). The region spanning 23–293 (LDGKLVPNEG…LKGFTYINAD (271 aa)) is the GH26 domain. The active-site Proton donor is the Glu138. Glu234 (nucleophile) is an active-site residue. The segment covering 352-374 (DNGGDNGGDNGGDNGGDNGGDNG) has biased composition (gly residues). A disordered region spans residues 352–380 (DNGGDNGGDNGGDNGGDNGGDNGGTEPPE). The interval 377 to 469 (EPPENCQDDF…NITFTTQVCN (93 aa)) is carbohydrate binding module (CBM). 2 disulfides stabilise this stretch: Cys382-Cys468 and Cys413-Cys418.

Belongs to the glycosyl hydrolase 26 family.

It carries out the reaction Random hydrolysis of (1-&gt;3)-beta-D-glycosidic linkages in (1-&gt;3)-beta-D-xylans.. Completely inhibited by CuCl(2), FeCl(3), HgCl(2) and N-bromosuccinimide. Moderately inhibited by AgCl, AlCl(3), Pb(CH(3)COO)(2) and dithiothreitol. BaCl(2), CaCl(2), KCl, MgCl(2), MnCl(2), NaCl, ZnCl(2), ethylenediaminetetraacetic acid, N-ethylmaleimide, iodoacetic acid and p-chloromercuribenzoic acid have little or no effect on activity. Functionally, catalyzes the hydrolysis of beta-1,3-xylan into oligosaccharides, mainly xylotriose and xylobiose with smaller amounts of xylotetraose, xylose, xylopentaose and xylohexaose. Does not hydrolyze xylobiose, p-nitrophenyl-beta-xyloside, beta-1,4-xylan, carboxymethylcellulose, curdlan, glucomannan or beta-1,4-mannan. The protein is Beta-1,3-xylanase of Alcaligenes sp.